A 372-amino-acid chain; its full sequence is N-methyl-L-tryptophan oxidase (372 aa).

4-34 lines the FAD pocket; that stretch reads DLIIIGSGSVGAAAGYYATRAGLNVLMTDAH. The residue at position 308 (cysteine 308) is an S-8alpha-FAD cysteine.

This sequence belongs to the MSOX/MTOX family. MTOX subfamily. In terms of assembly, monomer. Requires FAD as cofactor.

The enzyme catalyses N(alpha)-methyl-L-tryptophan + O2 + H2O = L-tryptophan + formaldehyde + H2O2. Catalyzes the oxidative demethylation of N-methyl-L-tryptophan. The protein is N-methyl-L-tryptophan oxidase of Shigella flexneri serotype 5b (strain 8401).